A 169-amino-acid chain; its full sequence is Lipoprotein signal peptidase (169 aa).

4 helical membrane-spanning segments follow: residues Pro-4–Ile-24, Trp-29–Thr-49, Trp-70–Ser-90, and Tyr-101–Val-121. Residues Asp-123 and Asp-141 contribute to the active site. A helical transmembrane segment spans residues Phe-137–Leu-157.

It belongs to the peptidase A8 family.

It localises to the cell inner membrane. The catalysed reaction is Release of signal peptides from bacterial membrane prolipoproteins. Hydrolyzes -Xaa-Yaa-Zaa-|-(S,diacylglyceryl)Cys-, in which Xaa is hydrophobic (preferably Leu), and Yaa (Ala or Ser) and Zaa (Gly or Ala) have small, neutral side chains.. The protein operates within protein modification; lipoprotein biosynthesis (signal peptide cleavage). In terms of biological role, this protein specifically catalyzes the removal of signal peptides from prolipoproteins. This Yersinia pestis bv. Antiqua (strain Antiqua) protein is Lipoprotein signal peptidase.